The chain runs to 505 residues: ATP synthase subunit alpha, chloroplastic (505 aa).

Residue 170–177 (GDRQTGKT) participates in ATP binding.

This sequence belongs to the ATPase alpha/beta chains family. In terms of assembly, F-type ATPases have 2 components, CF(1) - the catalytic core - and CF(0) - the membrane proton channel. CF(1) has five subunits: alpha(3), beta(3), gamma(1), delta(1), epsilon(1). CF(0) has four main subunits: a, b, b' and c.

It is found in the plastid. The protein resides in the chloroplast thylakoid membrane. The enzyme catalyses ATP + H2O + 4 H(+)(in) = ADP + phosphate + 5 H(+)(out). Its function is as follows. Produces ATP from ADP in the presence of a proton gradient across the membrane. The alpha chain is a regulatory subunit. The chain is ATP synthase subunit alpha, chloroplastic from Oenothera biennis (German evening primrose).